A 453-amino-acid chain; its full sequence is UDP-glucose 6-dehydrogenase (453 aa).

NAD(+)-binding positions include Arg2 to Phe19, Val11, Thr121, and Glu158. Residues Glu154–Glu158, Lys210, Asn214, Phe255–Gly259, and Gly263 each bind substrate. The active-site Nucleophile is Cys266. An NAD(+)-binding site is contributed by Lys269. A substrate-binding site is contributed by Lys327. An NAD(+)-binding site is contributed by Arg334.

This sequence belongs to the UDP-glucose/GDP-mannose dehydrogenase family.

The catalysed reaction is UDP-alpha-D-glucose + 2 NAD(+) + H2O = UDP-alpha-D-glucuronate + 2 NADH + 3 H(+). The protein operates within nucleotide-sugar biosynthesis; UDP-alpha-D-glucuronate biosynthesis; UDP-alpha-D-glucuronate from UDP-alpha-D-glucose: step 1/1. It functions in the pathway bacterial outer membrane biogenesis; lipopolysaccharide biosynthesis. In Pseudomonas aeruginosa (strain ATCC 15692 / DSM 22644 / CIP 104116 / JCM 14847 / LMG 12228 / 1C / PRS 101 / PAO1), this protein is UDP-glucose 6-dehydrogenase (udg).